The sequence spans 289 residues: Energy-coupling factor transporter ATP-binding protein EcfA2 (289 aa).

In terms of domain architecture, ABC transporter spans 3–245 (IEFKNVDYVY…QEWVKKHYLD (243 aa)). 40–47 (GHTGSGKS) is a binding site for ATP.

The protein belongs to the ABC transporter superfamily. Energy-coupling factor EcfA family. Forms a stable energy-coupling factor (ECF) transporter complex composed of 2 membrane-embedded substrate-binding proteins (S component), 2 ATP-binding proteins (A component) and 2 transmembrane proteins (T component).

Its subcellular location is the cell membrane. Its function is as follows. ATP-binding (A) component of a common energy-coupling factor (ECF) ABC-transporter complex. Unlike classic ABC transporters this ECF transporter provides the energy necessary to transport a number of different substrates. The sequence is that of Energy-coupling factor transporter ATP-binding protein EcfA2 from Lactobacillus johnsonii (strain CNCM I-12250 / La1 / NCC 533).